A 130-amino-acid chain; its full sequence is MAAKFEVGSVYTGKVTGLQAYGAFVALDEETQGLVHISEVTHGFVKDINEHLSVGDEVQVKVLAVDEEKGKISLSIRATQAAPEKKESKPRKPKAAQVSEEASTPQGFNTLKDKLEEWIEMSNRKDLIKK.

The region spanning G8–R77 is the S1 motif domain. A disordered region spans residues I76 to N109. A compositionally biased stretch (polar residues) spans E100–N109.

Found in association with the 30S subunit of the ribosome.

Its subcellular location is the cytoplasm. The protein is General stress protein 13 (yugI) of Bacillus subtilis (strain 168).